Consider the following 370-residue polypeptide: Quinolinate synthase (370 aa).

2 residues coordinate iminosuccinate: H62 and S83. C128 contacts [4Fe-4S] cluster. Iminosuccinate is bound by residues Y154 to N156 and S171. C215 contacts [4Fe-4S] cluster. Residues H241–E243 and T258 contribute to the iminosuccinate site. C312 contributes to the [4Fe-4S] cluster binding site.

Belongs to the quinolinate synthase family. Type 1 subfamily. It depends on [4Fe-4S] cluster as a cofactor.

Its subcellular location is the cytoplasm. It carries out the reaction iminosuccinate + dihydroxyacetone phosphate = quinolinate + phosphate + 2 H2O + H(+). It participates in cofactor biosynthesis; NAD(+) biosynthesis; quinolinate from iminoaspartate: step 1/1. In terms of biological role, catalyzes the condensation of iminoaspartate with dihydroxyacetone phosphate to form quinolinate. The chain is Quinolinate synthase from Neisseria gonorrhoeae (strain ATCC 700825 / FA 1090).